Reading from the N-terminus, the 998-residue chain is DNA damage-induced apoptosis suppressor protein (998 aa).

The segment at 815–834 is disordered; the sequence is DKQQASPSCPKNIKTPSQKI. Over residues 817–834 the composition is skewed to polar residues; the sequence is QQASPSCPKNIKTPSQKI.

Highly expressed in colorectal and lung cancer tissues.

It localises to the cytoplasm. The protein resides in the nucleus. Functionally, may be an anti-apoptotic protein involved in DNA repair or cell survival. The sequence is that of DNA damage-induced apoptosis suppressor protein (DDIAS) from Homo sapiens (Human).